Here is a 191-residue protein sequence, read N- to C-terminus: Recombination protein RecR (191 aa).

A C4-type zinc finger spans residues 56-71 (CQNCNFLQSNNICHFC). The Toprim domain occupies 78–170 (KQLMIFETTS…KVTKLAQGLP (93 aa)).

The protein belongs to the RecR family.

Its function is as follows. May play a role in DNA repair. It seems to be involved in an RecBC-independent recombinational process of DNA repair. It may act with RecF and RecO. The chain is Recombination protein RecR from Mycoplasmopsis pulmonis (strain UAB CTIP) (Mycoplasma pulmonis).